A 161-amino-acid polypeptide reads, in one-letter code: Urocortin-3 (161 aa).

An N-terminal signal peptide occupies residues 1–21 (MLMPVHFLLLLLLLLGGPRTG). Positions 22–118 (LPHKFYKAKP…QDTAKSPHRT (97 aa)) are excised as a propeptide. The segment at 64–118 (SRDASSGEEEEGKEKKTFPISGARGGARGTRYRYVSQAQPRGKPRQDTAKSPHRT) is disordered. Isoleucine amide is present on I157.

Belongs to the sauvagine/corticotropin-releasing factor/urotensin I family. Binds with high affinity to CRF receptors 2-alpha and 2-beta.

Its subcellular location is the secreted. Functionally, suppresses food intake, delays gastric emptying and decreases heat-induced edema. Might represent an endogenous ligand for maintaining homeostasis after stress. This chain is Urocortin-3 (UCN3), found in Homo sapiens (Human).